The following is a 536-amino-acid chain: Global nitrogen regulator NrpR (536 aa).

The interval V7–L72 is winged helix-turn-helix. NRD regions lie at residues R80 to F314 and K315 to I536.

It belongs to the NrpR family. In terms of assembly, homotetramer. Binds to a single operator as a dimer and cooperatively to two operators as a dimer pair.

Under nitrogen limitation, binding of the intracellular nitrogen metabolite 2-oxoglutarate to NrpR decreases the binding affinity of NrpR to DNA, leading to initiation of transcription. In terms of biological role, transcriptional repressor of nitrogen fixation and assimilation genes. Binds to two tandem operators in the glnA and nif promoters, thereby blocking transcription of the genes. The polypeptide is Global nitrogen regulator NrpR (Methanococcus maripaludis (strain DSM 14266 / JCM 13030 / NBRC 101832 / S2 / LL)).